Here is a 55-residue protein sequence, read N- to C-terminus: Bowman-Birk type proteinase inhibitor B1 (55 aa).

Cystine bridges form between Cys-6–Cys-53, Cys-12–Cys-17, Cys-26–Cys-33, and Cys-30–Cys-45.

The protein belongs to the Bowman-Birk serine protease inhibitor family. Expressed in bulb (at protein level).

Its function is as follows. Serine protease inhibitor. Weakly inhibits trypsin (Ki = 167 nM). Does not inhibit bacterial subtilisin or mamallian chymotrypsin. In Hyacinthus orientalis (Common hyacinth), this protein is Bowman-Birk type proteinase inhibitor B1.